The following is a 431-amino-acid chain: Glucose-1-phosphate adenylyltransferase (431 aa).

Lysine 39 contacts beta-D-fructose 1,6-bisphosphate. AMP contacts are provided by arginine 40, histidine 46, and arginine 52. Alpha-D-glucose 1-phosphate is bound at residue tyrosine 114. Arginine 130 is an AMP binding site. Residues glycine 179, glutamate 194–lysine 195, and serine 212 contribute to the alpha-D-glucose 1-phosphate site. Residues glutamate 370 and arginine 386 each coordinate AMP. Beta-D-fructose 1,6-bisphosphate-binding positions include arginine 419–arginine 423 and glutamine 429–arginine 431.

It belongs to the bacterial/plant glucose-1-phosphate adenylyltransferase family. As to quaternary structure, homotetramer.

It carries out the reaction alpha-D-glucose 1-phosphate + ATP + H(+) = ADP-alpha-D-glucose + diphosphate. It functions in the pathway glycan biosynthesis; glycogen biosynthesis. Allosterically activated by fructose-1,6-bisphosphate (F16BP) and inhibited by AMP. Involved in the biosynthesis of ADP-glucose, a building block required for the elongation reactions to produce glycogen. Catalyzes the reaction between ATP and alpha-D-glucose 1-phosphate (G1P) to produce pyrophosphate and ADP-Glc. The protein is Glucose-1-phosphate adenylyltransferase of Shigella dysenteriae serotype 1 (strain Sd197).